The chain runs to 379 residues: Cytochrome b (379 aa).

Helical transmembrane passes span 33 to 53 (FGSLLGLCLISQILTGLFLAM), 77 to 98 (WLIRNLHANGASFFFICLYLHI), 113 to 133 (WNIGVVLFLLVMMTAFVGYVL), and 178 to 198 (FFAFHFLFPFVVAGATMIHLL). Heme b contacts are provided by histidine 83 and histidine 97. 2 residues coordinate heme b: histidine 182 and histidine 196. Histidine 201 lines the a ubiquinone pocket. The next 4 helical transmembrane spans lie at 226–246 (YKDLLGFIIMLTALTMLALFY), 288–308 (LGGVLALLSSILVLMVVPILH), 320–340 (ASQLLFWILVADMLVLTWIGG), and 347–367 (YIIIGQVASVLYFSLFLVLNP).

It belongs to the cytochrome b family. The cytochrome bc1 complex contains 3 respiratory subunits (MT-CYB, CYC1 and UQCRFS1), 2 core proteins (UQCRC1 and UQCRC2) and probably 6 low-molecular weight proteins. Heme b is required as a cofactor.

It is found in the mitochondrion inner membrane. In terms of biological role, component of the ubiquinol-cytochrome c reductase complex (complex III or cytochrome b-c1 complex) that is part of the mitochondrial respiratory chain. The b-c1 complex mediates electron transfer from ubiquinol to cytochrome c. Contributes to the generation of a proton gradient across the mitochondrial membrane that is then used for ATP synthesis. The sequence is that of Cytochrome b (mt-cyb) from Anguilla dieffenbachii (New Zealand longfin eel).